Consider the following 437-residue polypeptide: MSLFLDTARIEVKAGKGGDGAVAFRREKYVPDGGPAGGDGGKGGSVIFKVDEGMSTLMDFRYNRIFRGKPGEKGMNKGMHGRGAEDLIVHVPQGTTVKDNETGDVLVDLIEKDQEFVVAKGGRGGRGNIRFATPRNPAPEVAENGEPGEDKILLLELRVLADVGLVGFPSVGKSTLLSVVSNARPKIGAYHFTTITPNIGMVQVGYGDSFVMADMPGLIEGAHSGAGLGIQFLRHIERTRVLLHILDMSELEGRDPYEDYKTINDELESYNLRLMERPQLIVANKMDMPEAAERLAEFKEKLAADLEADQEMPEIFEVSGLIKTGLQGLLARTSELLAQTPEFLLYDEDALGDEVAYYGFEDEEKPFKVSRDDDGGWRLSGEKIEKLFIMTNFDHDESVMKFARQMRAFGVDETLRSMGAKDGDYVRIQKFEFEFVD.

Residues Ser-2–Leu-160 form the Obg domain. Positions Ala-161 to Ala-338 constitute an OBG-type G domain. Residues Gly-167–Ser-174, Phe-192–Thr-196, Asp-214–Gly-217, Asn-284–Asp-287, and Ser-319–Leu-321 contribute to the GTP site. Positions 174 and 194 each coordinate Mg(2+). The 79-residue stretch at Gly-359–Asp-437 folds into the OCT domain.

This sequence belongs to the TRAFAC class OBG-HflX-like GTPase superfamily. OBG GTPase family. Monomer. It depends on Mg(2+) as a cofactor.

The protein resides in the cytoplasm. Its function is as follows. An essential GTPase which binds GTP, GDP and possibly (p)ppGpp with moderate affinity, with high nucleotide exchange rates and a fairly low GTP hydrolysis rate. Plays a role in control of the cell cycle, stress response, ribosome biogenesis and in those bacteria that undergo differentiation, in morphogenesis control. The chain is GTPase Obg from Lactococcus lactis subsp. cremoris (strain SK11).